Consider the following 196-residue polypeptide: Probable GTP-binding protein EngB (196 aa).

An EngB-type G domain is found at Lys22–Val195. Residues Gly30–Ser37, Gly57–Thr61, Asp75–Gly78, Thr142–Asp145, and Phe174–Ala176 contribute to the GTP site. 2 residues coordinate Mg(2+): Ser37 and Thr59.

It belongs to the TRAFAC class TrmE-Era-EngA-EngB-Septin-like GTPase superfamily. EngB GTPase family. It depends on Mg(2+) as a cofactor.

Necessary for normal cell division and for the maintenance of normal septation. This is Probable GTP-binding protein EngB from Ligilactobacillus salivarius (strain UCC118) (Lactobacillus salivarius).